Consider the following 537-residue polypeptide: Lariat debranching enzyme (537 aa).

A divalent metal cation contacts are provided by Cys8, His10, Asp39, and Asn84. Residues Ser124 to Arg154 are lariat recognition loop. The a divalent metal cation site is built by His174, His226, and His228. Disordered stretches follow at residues Lys242–Pro272 and Thr473–Asp537. A compositionally biased stretch (low complexity) spans Ser251 to Ser260.

Belongs to the lariat debranching enzyme family. It depends on Fe(2+) as a cofactor. Requires Zn(2+) as cofactor. The cofactor is Mn(2+).

The protein resides in the nucleus. With respect to regulation, active in presence of diverse metals including Fe(2+), Zn(2+), Mn(2+). Binds two metal cations in two adjacent alpha and beta metal-binding pockets. Functionally, cleaves the 2'-5' phosphodiester linkage at the branch point of lariat intron pre-mRNAs after splicing and converts them into linear molecules that are subsequently degraded. It thereby facilitates ribonucleotide turnover. The sequence is that of Lariat debranching enzyme (DBR1) from Drosophila pseudoobscura pseudoobscura (Fruit fly).